The chain runs to 237 residues: Lectin ConGF (237 aa).

Mn(2+) is bound by residues E8 and D10. Positions 10, 12, 14, and 19 each coordinate Ca(2+). N14 contributes to the a carbohydrate binding site. Mn(2+) contacts are provided by D19 and H24. L99, Y100, D208, and R228 together coordinate a carbohydrate.

It belongs to the leguminous lectin family. Homotetramer; dimer of dimers. In terms of processing, concanavalin A-like lectins of the Diocleinae subtribe undergo proteolytic processing referred to as circular permutation. The propeptide is split into an N-terminal and a C-terminal part, the gamma and beta chain, respectively. These are then religated in beta-gamma order to form the mature alpha chain. The beta and gamma chains can often be detected in cell extracts. Residues 1-118 of the mature chain, as displayed here, probably constitute the beta chain in the propeptide, residues 119-237 the gamma chain.

Its function is as follows. Lectin. Induces paw edema in mice. Has a weak vasorelaxant effect on rat aorta. Has anti-inflammatory and anti-nociceptive effects. This is Lectin ConGF from Canavalia grandiflora (Jackbean).